We begin with the raw amino-acid sequence, 197 residues long: Recombination protein RecR (197 aa).

A C4-type zinc finger spans residues 57-72 (CSVCFAITEDDPCWIC). The Toprim domain occupies 79–174 (GTICVVEEPQ…KVTRLAHGIP (96 aa)).

Belongs to the RecR family.

May play a role in DNA repair. It seems to be involved in an RecBC-independent recombinational process of DNA repair. It may act with RecF and RecO. In Citrifermentans bemidjiense (strain ATCC BAA-1014 / DSM 16622 / JCM 12645 / Bem) (Geobacter bemidjiensis), this protein is Recombination protein RecR.